Reading from the N-terminus, the 84-residue chain is Small ribosomal subunit protein uS17 (84 aa).

This sequence belongs to the universal ribosomal protein uS17 family. Part of the 30S ribosomal subunit.

Functionally, one of the primary rRNA binding proteins, it binds specifically to the 5'-end of 16S ribosomal RNA. The polypeptide is Small ribosomal subunit protein uS17 (Clostridium botulinum (strain Eklund 17B / Type B)).